Here is a 325-residue protein sequence, read N- to C-terminus: 5-dehydro-2-deoxygluconokinase (325 aa).

This sequence belongs to the carbohydrate kinase PfkB family.

The enzyme catalyses 5-dehydro-2-deoxy-D-gluconate + ATP = 6-phospho-5-dehydro-2-deoxy-D-gluconate + ADP + H(+). It functions in the pathway polyol metabolism; myo-inositol degradation into acetyl-CoA; acetyl-CoA from myo-inositol: step 5/7. Its function is as follows. Catalyzes the phosphorylation of 5-dehydro-2-deoxy-D-gluconate (2-deoxy-5-keto-D-gluconate or DKG) to 6-phospho-5-dehydro-2-deoxy-D-gluconate (DKGP). This is 5-dehydro-2-deoxygluconokinase (iolC) from Bacillus subtilis (strain 168).